Reading from the N-terminus, the 245-residue chain is Probable phosphatase YcdX (245 aa).

Positions 7, 9, 15, 40, 73, 101, 131, 192, and 194 each coordinate Zn(2+).

The protein belongs to the PHP family. As to quaternary structure, homotrimer. It depends on Zn(2+) as a cofactor.

The sequence is that of Probable phosphatase YcdX from Escherichia fergusonii (strain ATCC 35469 / DSM 13698 / CCUG 18766 / IAM 14443 / JCM 21226 / LMG 7866 / NBRC 102419 / NCTC 12128 / CDC 0568-73).